A 393-amino-acid polypeptide reads, in one-letter code: Serine/threonine-protein phosphatase 2A activator 1 (393 aa).

Residues 328–393 (EKEEESIEQA…TSFSRDRLRR (66 aa)) are disordered. 2 stretches are compositionally biased toward polar residues: residues 335–356 (EQANAGSPGREQTSTRFPTSTS) and 365–386 (SGNNINYLLSHQNQSHRNQTSF). S341 is modified (phosphoserine).

It belongs to the PTPA-type PPIase family. As to quaternary structure, interacts with the phosphatase PP2A-like catalytic subunits PPG1, PPH3 and SIT4. Forms a ternary complex with SIT4-TAP42.

Its subcellular location is the cytoplasm. The protein localises to the nucleus. It carries out the reaction [protein]-peptidylproline (omega=180) = [protein]-peptidylproline (omega=0). Functionally, PPIases accelerate the folding of proteins. It catalyzes the cis-trans isomerization of proline imidic peptide bonds in oligopeptides. Acts as a regulatory subunit for TAP42-associated PP2A-like phosphatases modulating their activity or substrate specificity, probably by inducing a conformational change in the catalytic subunit, a direct target of the PPIase. Can reactivate inactive phosphatase PP2A-phosphatase methylesterase complexes (PP2Ai) in presence of ATP and Mg(2+) by dissociating the inactive form from the complex. Involved in the regulation of cell cycle progression, mitotic spindle formation, bud morphogenesis and DNA repair. In Saccharomyces cerevisiae (strain ATCC 204508 / S288c) (Baker's yeast), this protein is Serine/threonine-protein phosphatase 2A activator 1 (RRD1).